We begin with the raw amino-acid sequence, 372 residues long: Dual-specificity RNA methyltransferase RlmN (372 aa).

The active-site Proton acceptor is the E97. In terms of domain architecture, Radical SAM core spans 103–340; the sequence is ETDRKTLCVS…AVVRKNRGTD (238 aa). An intrachain disulfide couples C110 to C345. The [4Fe-4S] cluster site is built by C117, C121, and C124. Residues 172–173, S204, 226–228, and N302 each bind S-adenosyl-L-methionine; these read GE and SLN. The active-site S-methylcysteine intermediate is C345. A disordered region spans residues 350 to 372; that stretch reads AEGGPGDPRRRAAAALTGTPAAG. Over residues 362–372 the composition is skewed to low complexity; the sequence is AAALTGTPAAG.

Belongs to the radical SAM superfamily. RlmN family. [4Fe-4S] cluster serves as cofactor.

It localises to the cytoplasm. The enzyme catalyses adenosine(2503) in 23S rRNA + 2 reduced [2Fe-2S]-[ferredoxin] + 2 S-adenosyl-L-methionine = 2-methyladenosine(2503) in 23S rRNA + 5'-deoxyadenosine + L-methionine + 2 oxidized [2Fe-2S]-[ferredoxin] + S-adenosyl-L-homocysteine. It catalyses the reaction adenosine(37) in tRNA + 2 reduced [2Fe-2S]-[ferredoxin] + 2 S-adenosyl-L-methionine = 2-methyladenosine(37) in tRNA + 5'-deoxyadenosine + L-methionine + 2 oxidized [2Fe-2S]-[ferredoxin] + S-adenosyl-L-homocysteine. Functionally, specifically methylates position 2 of adenine 2503 in 23S rRNA and position 2 of adenine 37 in tRNAs. m2A2503 modification seems to play a crucial role in the proofreading step occurring at the peptidyl transferase center and thus would serve to optimize ribosomal fidelity. The protein is Dual-specificity RNA methyltransferase RlmN of Anaeromyxobacter dehalogenans (strain 2CP-C).